Consider the following 179-residue polypeptide: Inner membrane-spanning protein YciB (179 aa).

The next 5 membrane-spanning stretches (helical) occupy residues 22 to 42 (IYAATTALIVATAIVLIYSWV), 50 to 70 (MALITFVLVVVFGGLTLFFHN), 76 to 96 (WKVTVIYALFAGALLVSQWVM), 121 to 141 (LAWAVFFILCGLANIYIAFWL), and 149 to 169 (FKVFGLTALTLIFTLLSGIYI).

It belongs to the YciB family.

Its subcellular location is the cell inner membrane. Functionally, plays a role in cell envelope biogenesis, maintenance of cell envelope integrity and membrane homeostasis. The protein is Inner membrane-spanning protein YciB of Shigella dysenteriae serotype 1 (strain Sd197).